The primary structure comprises 85 residues: Small ribosomal subunit protein uS17 (85 aa).

It belongs to the universal ribosomal protein uS17 family. Part of the 30S ribosomal subunit.

In terms of biological role, one of the primary rRNA binding proteins, it binds specifically to the 5'-end of 16S ribosomal RNA. The chain is Small ribosomal subunit protein uS17 from Blochmanniella floridana.